The chain runs to 311 residues: tRNA pseudouridine synthase B (311 aa).

Aspartate 49 functions as the Nucleophile in the catalytic mechanism.

It belongs to the pseudouridine synthase TruB family. Type 1 subfamily.

It catalyses the reaction uridine(55) in tRNA = pseudouridine(55) in tRNA. In terms of biological role, responsible for synthesis of pseudouridine from uracil-55 in the psi GC loop of transfer RNAs. This Actinobacillus succinogenes (strain ATCC 55618 / DSM 22257 / CCUG 43843 / 130Z) protein is tRNA pseudouridine synthase B.